The following is a 370-amino-acid chain: MASSTTRGPRVSDLFSGLPPAVTTPANQSAEASAGNGSVAGADAPAVTPFQSLQLVHQLKGLIVLLYSVVVVVGLVGNCLLVLVIARVRRLHNVTNFLIGNLALSDVLMCTACVPLTLAYAFEPRGWVFGGGLCHLVFFLQPVTVYVSVFTLTTIAVDRYVVLVHPLRRRISLRLSAYAVLAIWALSAVLALPAAVHTYHVELKPHDVRLCEEFWGSQERQRQLYAWGLLLVTYLLPLLVILLSYVRVSVKLRNRVVPGCVTQSQADWDRARRRRTFCLLVVIVVVFAVCWLPLHVFNLLRDLDPHAIDPYAFGLVQLLCHWLAMSSACYNPFIYAWLHDSFREELRKLLVAWPRKIAPHGQNMTVSVVI.

The Extracellular portion of the chain corresponds to 1–62 (MASSTTRGPR…LQLVHQLKGL (62 aa)). N27 and N36 each carry an N-linked (GlcNAc...) asparagine glycan. A helical membrane pass occupies residues 63-83 (IVLLYSVVVVVGLVGNCLLVL). At 84–101 (VIARVRRLHNVTNFLIGN) the chain is on the cytoplasmic side. The helical transmembrane segment at 102-122 (LALSDVLMCTACVPLTLAYAF) threads the bilayer. The Extracellular portion of the chain corresponds to 123–126 (EPRG). A helical membrane pass occupies residues 127-147 (WVFGGGLCHLVFFLQPVTVYV). Cysteines 134 and 211 form a disulfide. At 148 to 175 (SVFTLTTIAVDRYVVLVHPLRRRISLRL) the chain is on the cytoplasmic side. The chain crosses the membrane as a helical span at residues 176–196 (SAYAVLAIWALSAVLALPAAV). At 197–225 (HTYHVELKPHDVRLCEEFWGSQERQRQLY) the chain is on the extracellular side. Residues 226 to 246 (AWGLLLVTYLLPLLVILLSYV) traverse the membrane as a helical segment. Over 247-276 (RVSVKLRNRVVPGCVTQSQADWDRARRRRT) the chain is Cytoplasmic. The chain crosses the membrane as a helical span at residues 277–297 (FCLLVVIVVVFAVCWLPLHVF). Topologically, residues 298-317 (NLLRDLDPHAIDPYAFGLVQ) are extracellular. A helical membrane pass occupies residues 318–338 (LLCHWLAMSSACYNPFIYAWL). Residues 339–369 (HDSFREELRKLLVAWPRKIAPHGQNMTVSVV) are Cytoplasmic-facing. The tract at residues 365 to 370 (TVSVVI) is required for interaction with GRIP1, GRIP2 and PICK1.

The protein belongs to the G-protein coupled receptor 1 family. In terms of assembly, interacts through its C-terminal region with the PDZ domain-containing proteins GRIP1, GRIP2 and PICK1. Interacts with PDZ domains 4 and 5 of GRIP1 and with the PDZ domain of PICK1. Only detected in the pituitary gland and in all cell types of pituitary adenomas.

It is found in the cell membrane. Receptor for prolactin-releasing peptide (PrRP). Implicated in lactation, regulation of food intake and pain-signal processing. The polypeptide is Prolactin-releasing peptide receptor (PRLHR) (Homo sapiens (Human)).